A 1705-amino-acid chain; its full sequence is Clathrin heavy chain 1 (1705 aa).

Ala-2 is subject to N-acetylalanine. The globular terminal domain stretch occupies residues 2 to 492 (AAANAPIIMK…VDNDLALKIY (491 aa)). WD40-like repeat regions lie at residues 25–67 (FITF…RPIT), 68–113 (ADSA…MPEQ), 114–155 (VAFW…ANLA), 156–205 (NNQI…QALE), 206–270 (AHAA…PDFA), 271–314 (DDFP…ISPD), and 315–343 (PIFL…ATVN). The binding site for the uncoating ATPase, involved in lattice disassembly stretch occupies residues 462-478 (ENWLAEDKLECSEELGD). A flexible linker region spans residues 493–536 (IKARATPKVVAAFAERREFDKILIYSKQVGYTPDYMFLLQTILR). Positions 537–648 (TDPQGAVNFA…QSLKHYSELP (112 aa)) are distal segment. Positions 537–1705 (TDPQGAVNFA…PYGMPPMGGY (1169 aa)) are heavy chain arm. 7 CHCR repeats span residues 551–697 (QMEG…QIIV), 700–842 (CKEY…PEDF), 847–986 (ILSV…QLID), 993–1138 (LPES…VSDA), 1142–1283 (FIRA…FRLA), 1288–1434 (LNII…DIIN), and 1437–1580 (LNVL…KECF). The interval 653–1705 (VIVNTHAIEP…PYGMPPMGGY (1053 aa)) is proximal segment. The interval 1227–1536 (AAKIIYAFIS…YIYKKAGRWK (310 aa)) is involved in binding clathrin light chain. Positions 1564–1705 (AEQLLVYFIE…PYGMPPMGGY (142 aa)) are trimerization.

Belongs to the clathrin heavy chain family. Clathrin triskelions, composed of 3 heavy chains and 3 light chains, are the basic subunits of the clathrin coat. Interacts with SCYL2B.

The protein resides in the cytoplasmic vesicle membrane. Its subcellular location is the membrane. It localises to the coated pit. In terms of biological role, clathrin is the major protein of the polyhedral coat of coated pits and vesicles. Mediates endocytosis and is required for a correct polar distribution of PIN auxin transporters. This Arabidopsis thaliana (Mouse-ear cress) protein is Clathrin heavy chain 1.